Reading from the N-terminus, the 204-residue chain is Thymidylate kinase (204 aa).

12–19 contacts ATP; the sequence is GVDGAGKS.

Belongs to the thymidylate kinase family.

The enzyme catalyses dTMP + ATP = dTDP + ADP. Functionally, phosphorylation of dTMP to form dTDP in both de novo and salvage pathways of dTTP synthesis. This chain is Thymidylate kinase, found in Thiobacillus denitrificans (strain ATCC 25259 / T1).